Consider the following 400-residue polypeptide: Protein phosphatase methylesterase 1 (400 aa).

Residues 1-72 (MSDLQRTWAK…NQKLFARPQG (72 aa)) are disordered. Acidic residues predominate over residues 19-28 (PFDEPQEEQG). The span at 44–54 (SSASSASSVSS) shows a compositional bias: low complexity. Residues 55–64 (TGTIIPSPNQ) show a composition bias toward polar residues. Active-site residues include Ser202, Asp228, and His358.

It belongs to the AB hydrolase superfamily.

It carries out the reaction [phosphatase 2A protein]-C-terminal L-leucine methyl ester + H2O = [phosphatase 2A protein]-C-terminal L-leucine + methanol + H(+). Its function is as follows. Demethylates proteins that have been reversibly carboxymethylated. Demethylates the phosphatase PP2A catalytic subunit. The polypeptide is Protein phosphatase methylesterase 1 (PPE1) (Gibberella zeae (strain ATCC MYA-4620 / CBS 123657 / FGSC 9075 / NRRL 31084 / PH-1) (Wheat head blight fungus)).